We begin with the raw amino-acid sequence, 283 residues long: Cell differentiation protein rcd1 (283 aa).

This sequence belongs to the CNOT9 family.

A differentiation-controlling factor that is essential for the onset of sexual development. Induces ste11 when sexual development is invoked through nitrogen starvation. The chain is Cell differentiation protein rcd1 (rcd1) from Schizosaccharomyces pombe (strain 972 / ATCC 24843) (Fission yeast).